The primary structure comprises 469 residues: Bifunctional protein GlmU (469 aa).

Residues 1 to 237 form a pyrophosphorylase region; that stretch reads MTTNRKFAIA…SHEVLGVNTR (237 aa). UDP-N-acetyl-alpha-D-glucosamine contacts are provided by residues 12–15, Lys26, Gln78, 83–84, 105–107, Gly144, Glu162, Asn177, and Asn235; these read LAAG, GT, and SGD. Asp107 is a binding site for Mg(2+). Asn235 lines the Mg(2+) pocket. Residues 238 to 258 form a linker region; that stretch reads QDLASLDAHLRLQKCQQLMSA. The segment at 259–469 is N-acetyltransferase; sequence GVSIFKPETC…KKRAEQKKKK (211 aa). UDP-N-acetyl-alpha-D-glucosamine is bound by residues Arg341 and Lys359. Residue His371 is the Proton acceptor of the active site. Tyr374 and Asn385 together coordinate UDP-N-acetyl-alpha-D-glucosamine. Residues Ala388, 394–395, Ser413, Ala431, and Arg448 contribute to the acetyl-CoA site; that span reads NY.

In the N-terminal section; belongs to the N-acetylglucosamine-1-phosphate uridyltransferase family. The protein in the C-terminal section; belongs to the transferase hexapeptide repeat family. In terms of assembly, homotrimer. The cofactor is Mg(2+).

The protein localises to the cytoplasm. The catalysed reaction is alpha-D-glucosamine 1-phosphate + acetyl-CoA = N-acetyl-alpha-D-glucosamine 1-phosphate + CoA + H(+). It carries out the reaction N-acetyl-alpha-D-glucosamine 1-phosphate + UTP + H(+) = UDP-N-acetyl-alpha-D-glucosamine + diphosphate. Its pathway is nucleotide-sugar biosynthesis; UDP-N-acetyl-alpha-D-glucosamine biosynthesis; N-acetyl-alpha-D-glucosamine 1-phosphate from alpha-D-glucosamine 6-phosphate (route II): step 2/2. It functions in the pathway nucleotide-sugar biosynthesis; UDP-N-acetyl-alpha-D-glucosamine biosynthesis; UDP-N-acetyl-alpha-D-glucosamine from N-acetyl-alpha-D-glucosamine 1-phosphate: step 1/1. It participates in bacterial outer membrane biogenesis; LPS lipid A biosynthesis. Functionally, catalyzes the last two sequential reactions in the de novo biosynthetic pathway for UDP-N-acetylglucosamine (UDP-GlcNAc). The C-terminal domain catalyzes the transfer of acetyl group from acetyl coenzyme A to glucosamine-1-phosphate (GlcN-1-P) to produce N-acetylglucosamine-1-phosphate (GlcNAc-1-P), which is converted into UDP-GlcNAc by the transfer of uridine 5-monophosphate (from uridine 5-triphosphate), a reaction catalyzed by the N-terminal domain. In Koribacter versatilis (strain Ellin345), this protein is Bifunctional protein GlmU.